A 148-amino-acid chain; its full sequence is MVXWTDXERHVIADVWGKINPDEIGPHALARLLIVYPWTQRYFSSFGNLSNAAAILGNPKVAAHGKVVVGGLDKAVKHLDNVKGTYAKLSELHSEKLHVDPSNFTLLADCLTITLAAKFGPSVFTPEVHEVWQKFLNVAVAALGKQYH.

Positions 3–148 (XWTDXERHVI…AVAALGKQYH (146 aa)) constitute a Globin domain. The heme b site is built by histidine 64 and histidine 93.

It belongs to the globin family. In terms of assembly, heterotetramer of two alpha chains and two beta chains. In terms of tissue distribution, red blood cells.

Involved in oxygen transport from gills to the various peripheral tissues. This Silurus asotus (Amur catfish) protein is Hemoglobin subunit beta (hbb).